The following is a 462-amino-acid chain: Cysteine--tRNA ligase (462 aa).

Zn(2+) is bound at residue C28. The short motif at 30 to 40 (ITVYDLCHIGH) is the 'HIGH' region element. Positions 210, 235, and 239 each coordinate Zn(2+). A 'KMSKS' region motif is present at residues 267–271 (KMSKS). ATP is bound at residue K270.

Belongs to the class-I aminoacyl-tRNA synthetase family. As to quaternary structure, monomer. Zn(2+) is required as a cofactor.

Its subcellular location is the cytoplasm. It catalyses the reaction tRNA(Cys) + L-cysteine + ATP = L-cysteinyl-tRNA(Cys) + AMP + diphosphate. This is Cysteine--tRNA ligase from Erwinia tasmaniensis (strain DSM 17950 / CFBP 7177 / CIP 109463 / NCPPB 4357 / Et1/99).